A 156-amino-acid chain; its full sequence is Transcription antitermination protein NusB (156 aa).

The protein belongs to the NusB family.

In terms of biological role, involved in transcription antitermination. Required for transcription of ribosomal RNA (rRNA) genes. Binds specifically to the boxA antiterminator sequence of the ribosomal RNA (rrn) operons. In Mycobacterium bovis (strain ATCC BAA-935 / AF2122/97), this protein is Transcription antitermination protein NusB.